The chain runs to 586 residues: Arginine--tRNA ligase (586 aa).

The 'HIGH' region signature appears at 128 to 138 (ANPTGPLHVGH).

This sequence belongs to the class-I aminoacyl-tRNA synthetase family. Monomer.

It localises to the cytoplasm. The enzyme catalyses tRNA(Arg) + L-arginine + ATP = L-arginyl-tRNA(Arg) + AMP + diphosphate. The sequence is that of Arginine--tRNA ligase from Thioalkalivibrio sulfidiphilus (strain HL-EbGR7).